A 299-amino-acid polypeptide reads, in one-letter code: Taste receptor type 2 member 19 (299 aa).

Position 1 (M1) is a topological domain, extracellular. Residues 2–22 (MCFLLIISSILVVFAFVLGNV) traverse the membrane as a helical segment. Over 23-55 (ANGFIALVNVIDWVNTRKISSAEQILTALVVSR) the chain is Cytoplasmic. A helical membrane pass occupies residues 56-76 (IGLLWVMLFLWYATVFNSALY). Over 77–87 (GLEVRIVASNA) the chain is Extracellular. A helical membrane pass occupies residues 88 to 108 (WAVTNHFSMWLAASLSIFCLL). At 109–127 (KIANFSNLISLHLKKRIKS) the chain is on the cytoplasmic side. The helical transmembrane segment at 128 to 148 (VVLVILLGPLVFLICNLAVIT) threads the bilayer. At 149 to 181 (MDERVWTKEYEGNVTWKIKLRNAIHLSSLTVTT) the chain is on the extracellular side. Residue N161 is glycosylated (N-linked (GlcNAc...) asparagine). The chain crosses the membrane as a helical span at residues 182-202 (LANLIPFTLSLICFLLLICSL). Over 203 to 226 (CKHLKKMRLHSKGSQDPSTKVHIK) the chain is Cytoplasmic. The chain crosses the membrane as a helical span at residues 227 to 247 (ALQTVTSFLMLFAIYFLCIIT). The Extracellular portion of the chain corresponds to 248 to 259 (STWNLRTQQSKL). Residues 260 to 280 (VLLLCQTVAIMYPSFHSFILI) traverse the membrane as a helical segment. At 281-299 (MGSRKLKQTFLSVLWQMTR) the chain is on the cytoplasmic side.

It belongs to the G-protein coupled receptor T2R family. Expressed in subsets of taste receptor cells of the tongue and exclusively in gustducin-positive cells.

The protein localises to the membrane. In terms of biological role, receptor that may play a role in the perception of bitterness and is gustducin-linked. May play a role in sensing the chemical composition of the gastrointestinal content. The activity of this receptor may stimulate alpha gustducin, mediate PLC-beta-2 activation and lead to the gating of TRPM5. This Homo sapiens (Human) protein is Taste receptor type 2 member 19 (TAS2R19).